We begin with the raw amino-acid sequence, 357 residues long: N-acetyl-gamma-glutamyl-phosphate reductase (357 aa).

The active site involves Cys-151.

It belongs to the NAGSA dehydrogenase family. Type 1 subfamily.

It is found in the cytoplasm. It catalyses the reaction N-acetyl-L-glutamate 5-semialdehyde + phosphate + NADP(+) = N-acetyl-L-glutamyl 5-phosphate + NADPH + H(+). Its pathway is amino-acid biosynthesis; L-arginine biosynthesis; N(2)-acetyl-L-ornithine from L-glutamate: step 3/4. Its function is as follows. Catalyzes the NADPH-dependent reduction of N-acetyl-5-glutamyl phosphate to yield N-acetyl-L-glutamate 5-semialdehyde. The polypeptide is N-acetyl-gamma-glutamyl-phosphate reductase (Corynebacterium kroppenstedtii (strain DSM 44385 / JCM 11950 / CIP 105744 / CCUG 35717)).